Reading from the N-terminus, the 466-residue chain is Citrate synthase, mitochondrial (466 aa).

Residues 1–27 (MALLTAAARLFGAKNASCLVLAARHAS) constitute a mitochondrion transit peptide. The SIFI-degron motif lies at 2–21 (ALLTAAARLFGAKNASCLVL). An N6-succinyllysine modification is found at lysine 57. Residue lysine 76 is modified to N6-acetyllysine; alternate. Position 76 is an N6-succinyllysine; alternate (lysine 76). N6-succinyllysine occurs at positions 103 and 193. Phosphoserine is present on serine 226. Histidine 301 is an active-site residue. Lysine 321 and lysine 327 each carry N6-acetyllysine; alternate. Residues lysine 321 and lysine 327 each carry the N6-succinyllysine; alternate modification. Histidine 347 is an active-site residue. Arginine 356 contributes to the oxaloacetate binding site. Lysine 375 is modified (N6-acetyllysine; alternate). Lysine 375 is subject to N6-succinyllysine; alternate. Lysine 382 bears the N6-acetyllysine mark. Lysine 393 carries the post-translational modification N6-acetyllysine; alternate. Lysine 393 is subject to N6-succinyllysine; alternate. An N6,N6,N6-trimethyllysine modification is found at lysine 395. The active site involves aspartate 402. Positions 428 and 448 each coordinate oxaloacetate. Position 450 is an N6-succinyllysine (lysine 450). Residue lysine 459 is modified to N6-acetyllysine; alternate. An N6-succinyllysine; alternate modification is found at lysine 459.

This sequence belongs to the citrate synthase family. In terms of assembly, homodimer. Methylated. Trimethylation at Lys-395 by CSKMT decreases citrate synthase activity. Post-translationally, in response to mitochondrial stress, the precursor protein is ubiquitinated by the SIFI complex in the cytoplasm before mitochondrial import, leading to its degradation. Within the SIFI complex, UBR4 initiates ubiquitin chain that are further elongated or branched by KCMF1.

It localises to the mitochondrion matrix. The enzyme catalyses oxaloacetate + acetyl-CoA + H2O = citrate + CoA + H(+). It participates in carbohydrate metabolism; tricarboxylic acid cycle; isocitrate from oxaloacetate: step 1/2. Functionally, key enzyme of the Krebs tricarboxylic acid cycle which catalyzes the synthesis of citrate from acetyl coenzyme A and oxaloacetate. This is Citrate synthase, mitochondrial (CS) from Bos taurus (Bovine).